A 210-amino-acid polypeptide reads, in one-letter code: N-(5'-phosphoribosyl)anthranilate isomerase (210 aa).

Belongs to the TrpF family.

It carries out the reaction N-(5-phospho-beta-D-ribosyl)anthranilate = 1-(2-carboxyphenylamino)-1-deoxy-D-ribulose 5-phosphate. Its pathway is amino-acid biosynthesis; L-tryptophan biosynthesis; L-tryptophan from chorismate: step 3/5. The sequence is that of N-(5'-phosphoribosyl)anthranilate isomerase from Pseudomonas fluorescens (strain SBW25).